Reading from the N-terminus, the 387-residue chain is Cell surface GPI-anchored protein ARB_01627 (387 aa).

The N-terminal stretch at 1–19 is a signal peptide; it reads MAITKYLVSALAVAGLAFA. 8 N-linked (GlcNAc...) asparagine glycosylation sites follow: N73, N175, N201, N206, N231, N236, N253, and N270. The segment covering 338 to 361 has biased composition (basic and acidic residues); it reads TCRERQEKPKTGDDHSGGDEEGHK. Residues 338–362 form a disordered region; sequence TCRERQEKPKTGDDHSGGDEEGHKG. A364 is lipidated: GPI-anchor amidated alanine. Residues 365–387 constitute a propeptide, removed in mature form; the sequence is AAFAKAPAAALLIAFVGALQFFL.

The protein belongs to the SPS2 family. In terms of processing, the GPI-anchor is attached to the protein in the endoplasmic reticulum and serves to target the protein to the cell surface. There, the glucosamine-inositol phospholipid moiety is cleaved off and the GPI-modified mannoprotein is covalently attached via its lipidless GPI glycan remnant to the 1,6-beta-glucan of the outer cell wall layer.

It localises to the cell membrane. Its subcellular location is the secreted. The protein localises to the cell wall. Functionally, required for proper cell wall integrity and for the correct assembly of the mannoprotein outer layer of the cell wall. This chain is Cell surface GPI-anchored protein ARB_01627, found in Arthroderma benhamiae (strain ATCC MYA-4681 / CBS 112371) (Trichophyton mentagrophytes).